The following is a 251-amino-acid chain: GTP cyclohydrolase 1 type 2 homolog (251 aa).

A divalent metal cation is bound by residues H64, H65, D102, H219, and E223.

It belongs to the GTP cyclohydrolase I type 2/NIF3 family. In terms of assembly, homohexamer.

The protein is GTP cyclohydrolase 1 type 2 homolog of Chlamydia muridarum (strain MoPn / Nigg).